Here is a 674-residue protein sequence, read N- to C-terminus: Amino-acid acetyltransferase, mitochondrial (674 aa).

A mitochondrion-targeting transit peptide spans 1 to 50 (MPLVAAMLTRSNGAWKKATSVVQASICRDQQRPNHTTITSVTSVSQRRHF). Positions 33 to 45 (PNHTTITSVTSVS) are enriched in polar residues. Positions 33–74 (PNHTTITSVTSVSQRRHFSSAENGAKPSRSHPSAAEAKQKRE) are disordered. Positions 497–665 (GTPRLKLTDT…YEDVCRGVVP (169 aa)) constitute an N-acetyltransferase domain.

Belongs to the acetyltransferase family.

The protein localises to the mitochondrion. It carries out the reaction L-glutamate + acetyl-CoA = N-acetyl-L-glutamate + CoA + H(+). It participates in amino-acid biosynthesis; L-arginine biosynthesis; N(2)-acetyl-L-ornithine from L-glutamate: step 1/4. Functionally, N-acetylglutamate synthase involved in arginine biosynthesis. The sequence is that of Amino-acid acetyltransferase, mitochondrial (ARG2) from Podospora anserina (strain S / ATCC MYA-4624 / DSM 980 / FGSC 10383) (Pleurage anserina).